Here is an 81-residue protein sequence, read N- to C-terminus: ATP synthase subunit c, chloroplastic (81 aa).

A run of 2 helical transmembrane segments spans residues 3 to 23 (PLIS…ASIG) and 57 to 77 (LAFM…LLFA).

The protein belongs to the ATPase C chain family. As to quaternary structure, F-type ATPases have 2 components, F(1) - the catalytic core - and F(0) - the membrane proton channel. F(1) has five subunits: alpha(3), beta(3), gamma(1), delta(1), epsilon(1). F(0) has four main subunits: a(1), b(1), b'(1) and c(10-14). The alpha and beta chains form an alternating ring which encloses part of the gamma chain. F(1) is attached to F(0) by a central stalk formed by the gamma and epsilon chains, while a peripheral stalk is formed by the delta, b and b' chains.

It localises to the plastid. It is found in the chloroplast thylakoid membrane. Its function is as follows. F(1)F(0) ATP synthase produces ATP from ADP in the presence of a proton or sodium gradient. F-type ATPases consist of two structural domains, F(1) containing the extramembraneous catalytic core and F(0) containing the membrane proton channel, linked together by a central stalk and a peripheral stalk. During catalysis, ATP synthesis in the catalytic domain of F(1) is coupled via a rotary mechanism of the central stalk subunits to proton translocation. Functionally, key component of the F(0) channel; it plays a direct role in translocation across the membrane. A homomeric c-ring of between 10-14 subunits forms the central stalk rotor element with the F(1) delta and epsilon subunits. This is ATP synthase subunit c, chloroplastic from Pinus koraiensis (Korean pine).